The following is a 134-amino-acid chain: Large ribosomal subunit protein uL16c (134 aa).

The protein belongs to the universal ribosomal protein uL16 family. In terms of assembly, part of the 50S ribosomal subunit.

The protein localises to the plastid. The protein resides in the chloroplast. This is Large ribosomal subunit protein uL16c from Solanum lycopersicum (Tomato).